The chain runs to 218 residues: Recombination protein RecR (218 aa).

Residues 56-71 (CRICCNISREEVCRIC) form a C4-type zinc finger. The Toprim domain maps to 79–195 (STICVVEEPK…VVSRLASGMP (117 aa)).

It belongs to the RecR family.

Functionally, may play a role in DNA repair. It seems to be involved in an RecBC-independent recombinational process of DNA repair. It may act with RecF and RecO. The chain is Recombination protein RecR from Corynebacterium diphtheriae (strain ATCC 700971 / NCTC 13129 / Biotype gravis).